The primary structure comprises 265 residues: Chorismate mutase 2 (265 aa).

A Chorismate mutase domain is found at 10 to 265; it reads GSGCSNVLSL…EVEYLLRRLD (256 aa).

As to quaternary structure, homodimer. In terms of tissue distribution, expressed in roots, stems, cauline leaves and flowers, and at lower levels in rosette leaves and siliques.

Its subcellular location is the cytoplasm. The protein localises to the cytosol. The enzyme catalyses chorismate = prephenate. It participates in metabolic intermediate biosynthesis; prephenate biosynthesis; prephenate from chorismate: step 1/1. With respect to regulation, no allosteric regulation. The chain is Chorismate mutase 2 from Arabidopsis thaliana (Mouse-ear cress).